Here is a 2128-residue protein sequence, read N- to C-terminus: Spectrin beta chain, erythrocytic (2128 aa).

Residues 1 to 15 (MTSATEFENVGNQPP) show a composition bias toward polar residues. Residues 1–30 (MTSATEFENVGNQPPFSRINARWDAPDDEL) form a disordered region. Residues 2-275 (TSATEFENVG…IITYVVAFYH (274 aa)) form an actin-binding region. Ser36 bears the Phosphoserine mark. Calponin-homology (CH) domains lie at 54 to 158 (VVQK…LRFQ) and 173 to 278 (RSAK…HYFS). A Phosphothreonine modification is found at Thr104. Spectrin repeat units lie at residues 303–411 (MIEK…LALR), 416–517 (RQEF…QRLE), 521–627 (ALQK…QLEQ), 630–733 (RLWK…DLQD), 736–838 (NFFQ…KLQE), 845–942 (VFGE…REAV), 950–1050 (NYCV…LSLG), 1054–1157 (KLQA…NTLT), 1162–1250 (FQEF…RHKK), 1267–1368 (ELQN…EQLS), 1381–1455 (ADLN…FLDL), 1473–1574 (LQIS…RLRD), 1576–1680 (HEAQ…RLEN), 1682–1784 (YHLF…MQLL), 1789–1890 (DLHR…RAQL), 1897–1997 (FRFF…DRLH), and 2004–2064 (QFSR…KPTT). Ser1289 bears the Phosphoserine mark. The residue at position 2034 (Ser2034) is a Phosphoserine. Positions 2062–2108 (PTTLELKERQTPERPTEEPGPQEEEGETAGEAPQVHHAATERTSPVS) are disordered. Thr2064, Thr2072, and Thr2101 each carry phosphothreonine. The span at 2066–2078 (ELKERQTPERPTE) shows a compositional bias: basic and acidic residues. 5 positions are modified to phosphoserine: Ser2105, Ser2108, Ser2114, Ser2116, and Ser2119.

Belongs to the spectrin family. Composed of nonhomologous chains, alpha and beta, which aggregate to form dimers, tetramers, and higher polymers. Interacts with BCAM.

It localises to the cytoplasm. The protein resides in the cytoskeleton. It is found in the cell cortex. Spectrin is the major constituent of the cytoskeletal network underlying the erythrocyte plasma membrane. It associates with band 4.1 and actin to form the cytoskeletal superstructure of the erythrocyte plasma membrane. The chain is Spectrin beta chain, erythrocytic (Sptb) from Mus musculus (Mouse).